The primary structure comprises 164 residues: Phosphopantetheine adenylyltransferase (164 aa).

Serine 9 is a substrate binding site. ATP-binding positions include 9–10 (SF) and histidine 17. Lysine 41, leucine 73, and lysine 87 together coordinate substrate. ATP-binding positions include 88–90 (GLR), glutamate 98, and 122–128 (YSYLSSS).

It belongs to the bacterial CoaD family. In terms of assembly, homohexamer. It depends on Mg(2+) as a cofactor.

The protein resides in the cytoplasm. The catalysed reaction is (R)-4'-phosphopantetheine + ATP + H(+) = 3'-dephospho-CoA + diphosphate. Its pathway is cofactor biosynthesis; coenzyme A biosynthesis; CoA from (R)-pantothenate: step 4/5. In terms of biological role, reversibly transfers an adenylyl group from ATP to 4'-phosphopantetheine, yielding dephospho-CoA (dPCoA) and pyrophosphate. The protein is Phosphopantetheine adenylyltransferase of Rhodococcus opacus (strain B4).